The following is a 293-amino-acid chain: Lipoyl synthase (293 aa).

Positions 38, 43, 49, 64, 68, 71, and 277 each coordinate [4Fe-4S] cluster. The region spanning 50–266 is the Radical SAM core domain; sequence WSRGTATFLL…STIAKNAGIR (217 aa).

This sequence belongs to the radical SAM superfamily. Lipoyl synthase family. [4Fe-4S] cluster serves as cofactor.

The protein resides in the cytoplasm. It catalyses the reaction [[Fe-S] cluster scaffold protein carrying a second [4Fe-4S](2+) cluster] + N(6)-octanoyl-L-lysyl-[protein] + 2 oxidized [2Fe-2S]-[ferredoxin] + 2 S-adenosyl-L-methionine + 4 H(+) = [[Fe-S] cluster scaffold protein] + N(6)-[(R)-dihydrolipoyl]-L-lysyl-[protein] + 4 Fe(3+) + 2 hydrogen sulfide + 2 5'-deoxyadenosine + 2 L-methionine + 2 reduced [2Fe-2S]-[ferredoxin]. It functions in the pathway protein modification; protein lipoylation via endogenous pathway; protein N(6)-(lipoyl)lysine from octanoyl-[acyl-carrier-protein]: step 2/2. Functionally, catalyzes the radical-mediated insertion of two sulfur atoms into the C-6 and C-8 positions of the octanoyl moiety bound to the lipoyl domains of lipoate-dependent enzymes, thereby converting the octanoylated domains into lipoylated derivatives. This Chlorobium chlorochromatii (strain CaD3) protein is Lipoyl synthase.